A 30-amino-acid chain; its full sequence is Cyclotide hyen-K (30 aa).

Positions 1–30 (GIPCGESCIFIPCITTVVGCSCSNKVCYDN) form a cross-link, cyclopeptide (Gly-Asn). Disulfide bonds link C4–C20, C8–C22, and C13–C27.

This is a cyclic peptide. In terms of tissue distribution, detected in seeds (at protein level).

Probably participates in a plant defense mechanism. The sequence is that of Cyclotide hyen-K from Pigea enneasperma (Spade flower).